A 195-amino-acid chain; its full sequence is Recombination protein RecR (195 aa).

Residues 53 to 68 (CPVCFNIDVKSPCSIC) form a C4-type zinc finger. Residues 76-171 (QLLCIVEELG…KVTRLACGIP (96 aa)) enclose the Toprim domain.

Belongs to the RecR family.

May play a role in DNA repair. It seems to be involved in an RecBC-independent recombinational process of DNA repair. It may act with RecF and RecO. This chain is Recombination protein RecR, found in Ehrlichia chaffeensis (strain ATCC CRL-10679 / Arkansas).